The primary structure comprises 245 residues: tRNA (guanine-N(7)-)-methyltransferase (245 aa).

The S-adenosyl-L-methionine site is built by Glu75, Glu100, Asp127, and Asp149. The active site involves Asp149. Substrate is bound by residues Lys153, Asp185, and 222–225 (TKFE).

The protein belongs to the class I-like SAM-binding methyltransferase superfamily. TrmB family.

The catalysed reaction is guanosine(46) in tRNA + S-adenosyl-L-methionine = N(7)-methylguanosine(46) in tRNA + S-adenosyl-L-homocysteine. The protein operates within tRNA modification; N(7)-methylguanine-tRNA biosynthesis. Functionally, catalyzes the formation of N(7)-methylguanine at position 46 (m7G46) in tRNA. The sequence is that of tRNA (guanine-N(7)-)-methyltransferase from Acinetobacter baylyi (strain ATCC 33305 / BD413 / ADP1).